A 260-amino-acid chain; its full sequence is Imidazole glycerol phosphate synthase subunit HisF (260 aa).

Residues Asp-11 and Asp-130 contribute to the active site.

Belongs to the HisA/HisF family. As to quaternary structure, heterodimer of HisH and HisF.

It is found in the cytoplasm. The enzyme catalyses 5-[(5-phospho-1-deoxy-D-ribulos-1-ylimino)methylamino]-1-(5-phospho-beta-D-ribosyl)imidazole-4-carboxamide + L-glutamine = D-erythro-1-(imidazol-4-yl)glycerol 3-phosphate + 5-amino-1-(5-phospho-beta-D-ribosyl)imidazole-4-carboxamide + L-glutamate + H(+). It participates in amino-acid biosynthesis; L-histidine biosynthesis; L-histidine from 5-phospho-alpha-D-ribose 1-diphosphate: step 5/9. Its function is as follows. IGPS catalyzes the conversion of PRFAR and glutamine to IGP, AICAR and glutamate. The HisF subunit catalyzes the cyclization activity that produces IGP and AICAR from PRFAR using the ammonia provided by the HisH subunit. This is Imidazole glycerol phosphate synthase subunit HisF from Psychrobacter arcticus (strain DSM 17307 / VKM B-2377 / 273-4).